The sequence spans 173 residues: Small ribosomal subunit protein uS4c (173 aa).

Positions 94–155 (SRLDSKIYRS…TKLTSELIEK (62 aa)) constitute an S4 RNA-binding domain.

It belongs to the universal ribosomal protein uS4 family. As to quaternary structure, part of the 30S ribosomal subunit. Contacts protein S5. The interaction surface between S4 and S5 is involved in control of translational fidelity.

Its subcellular location is the plastid. One of the primary rRNA binding proteins, it binds directly to 16S rRNA where it nucleates assembly of the body of the 30S subunit. Functionally, with S5 and S12 plays an important role in translational accuracy. This chain is Small ribosomal subunit protein uS4c (rps4), found in Helicosporidium sp. subsp. Simulium jonesii (Green alga).